The sequence spans 296 residues: Phosphatidylserine decarboxylase proenzyme (296 aa).

Active-site charge relay system; for autoendoproteolytic cleavage activity residues include Asp113, His169, and Ser256. Catalysis depends on Ser256, which acts as the Schiff-base intermediate with substrate; via pyruvic acid; for decarboxylase activity. Ser256 bears the Pyruvic acid (Ser); by autocatalysis mark.

This sequence belongs to the phosphatidylserine decarboxylase family. PSD-B subfamily. Prokaryotic type II sub-subfamily. As to quaternary structure, heterodimer of a large membrane-associated beta subunit and a small pyruvoyl-containing alpha subunit. Pyruvate serves as cofactor. Is synthesized initially as an inactive proenzyme. Formation of the active enzyme involves a self-maturation process in which the active site pyruvoyl group is generated from an internal serine residue via an autocatalytic post-translational modification. Two non-identical subunits are generated from the proenzyme in this reaction, and the pyruvate is formed at the N-terminus of the alpha chain, which is derived from the carboxyl end of the proenzyme. The autoendoproteolytic cleavage occurs by a canonical serine protease mechanism, in which the side chain hydroxyl group of the serine supplies its oxygen atom to form the C-terminus of the beta chain, while the remainder of the serine residue undergoes an oxidative deamination to produce ammonia and the pyruvoyl prosthetic group on the alpha chain. During this reaction, the Ser that is part of the protease active site of the proenzyme becomes the pyruvoyl prosthetic group, which constitutes an essential element of the active site of the mature decarboxylase.

It localises to the cell membrane. It catalyses the reaction a 1,2-diacyl-sn-glycero-3-phospho-L-serine + H(+) = a 1,2-diacyl-sn-glycero-3-phosphoethanolamine + CO2. It functions in the pathway phospholipid metabolism; phosphatidylethanolamine biosynthesis; phosphatidylethanolamine from CDP-diacylglycerol: step 2/2. Its function is as follows. Catalyzes the formation of phosphatidylethanolamine (PtdEtn) from phosphatidylserine (PtdSer). The polypeptide is Phosphatidylserine decarboxylase proenzyme (Clostridium kluyveri (strain ATCC 8527 / DSM 555 / NBRC 12016 / NCIMB 10680 / K1)).